The primary structure comprises 315 residues: Protein OPG185 (315 aa).

Positions 1 to 16 (MTRLPILLLLISLVYA) are cleaved as a signal peptide. In terms of domain architecture, Ig-like V-type spans 17–121 (TPFPQTSKKI…NDTDKVDYEE (105 aa)). Over 17-279 (TPFPQTSKKI…SNYKTKDFVE (263 aa)) the chain is Virion surface. A disulfide bond links Cys-34 and Cys-103. Asn-37, Asn-69, Asn-112, and Asn-161 each carry an N-linked (GlcNAc...) asparagine; by host glycan. Residues 193–202 (NTVSASSGES) show a composition bias toward polar residues. Residues 193 to 213 (NTVSASSGESTTDETPEPITD) form a disordered region. N-linked (GlcNAc...) asparagine; by host glycosylation occurs at Asn-254. A helical transmembrane segment spans residues 280-303 (IFGITALIILSAVAIFCITYYIYN). Over 304-315 (KRSRKYKTENKV) the chain is Intravirion.

Belongs to the orthopoxvirus OPG185 family. Heterodimerizes with OPG040. The heterodimer OPG185-OPG040 interacts with components of the entry fusion complex OPG143 and OPG094. Heterodimer with C3/VPC protein; disulfide-linked. In terms of processing, glycosylated; contains phosphate and sulfate-substituted glycans. O-glycosylation is required for hemagglutination and hemadsorption activities of infected cell membranes.

Its subcellular location is the virion membrane. The protein localises to the host membrane. Its function is as follows. Prevents cell to cell fusion by interacting with and directing the viral OPG040 protein on the host plasma membrane. The OPG185-OPG040 complex associates with components of the entry fusion complex (EFC) presumably to avoid superinfection and syncytium formation. Via its interaction with C3/VCP protein, protects the infected cell and probably also the extracellular enveloped virus from complement attack. This Homo sapiens (Human) protein is Protein OPG185 (OPG185).